The primary structure comprises 602 residues: 4-hydroxy-3-methylbut-2-en-1-yl diphosphate synthase (flavodoxin) (602 aa).

[4Fe-4S] cluster is bound by residues Cys-508, Cys-511, Cys-543, and Glu-550.

The protein belongs to the IspG family. [4Fe-4S] cluster is required as a cofactor.

The catalysed reaction is (2E)-4-hydroxy-3-methylbut-2-enyl diphosphate + oxidized [flavodoxin] + H2O + 2 H(+) = 2-C-methyl-D-erythritol 2,4-cyclic diphosphate + reduced [flavodoxin]. The protein operates within isoprenoid biosynthesis; isopentenyl diphosphate biosynthesis via DXP pathway; isopentenyl diphosphate from 1-deoxy-D-xylulose 5-phosphate: step 5/6. Functionally, converts 2C-methyl-D-erythritol 2,4-cyclodiphosphate (ME-2,4cPP) into 1-hydroxy-2-methyl-2-(E)-butenyl 4-diphosphate. The protein is 4-hydroxy-3-methylbut-2-en-1-yl diphosphate synthase (flavodoxin) of Chlamydia trachomatis serovar L2b (strain UCH-1/proctitis).